A 232-amino-acid polypeptide reads, in one-letter code: MSATSTIVMPGERIAAIEELAKSKRVILGPGLRRLDDTVVASKAGPLRHKEPGTFWVDNYQRRYIPARGDLILGIVRAKAGDLYRVDIGATDTASISYLAFEAASKKNRPDLIPGDLIYARVLNASADIEPELVCVNSVGKSGKLGVLTDGFFFKCSLNLGRMLLRENCPVLAALTRELPYEIAVGVNGRIWLKAHSLKETVALANAISALEQSGCAEIDKICGNLGDFLQA.

This sequence belongs to the RRP40 family. As to quaternary structure, component of the RNA exosome complex. Specifically part of the catalytically inactive RNA exosome core complex.

The protein resides in the cytoplasm. Its subcellular location is the nucleus. The protein localises to the nucleolus. Its function is as follows. Non-catalytic component of the RNA exosome complex which has 3'-&gt;5' exoribonuclease activity and participates in a multitude of cellular RNA processing and degradation events. In the nucleus, the RNA exosome complex is involved in proper maturation of stable RNA species such as rRNA, snRNA and snoRNA, in the elimination of RNA processing by-products and non-coding 'pervasive' transcripts such as antisense RNA species, and of mRNAs with processing defects, thereby limiting or excluding their export to the cytoplasm. In the cytoplasm, the RNA exosome complex is involved in general mRNA turnover and specifically degrades inherently unstable mRNAs containing AU-rich elements (AREs) within their 3' untranslated regions, and in RNA surveillance pathways, preventing translation of aberrant mRNAs. The catalytic inactive RNA exosome core complex of 9 subunits is proposed to play a pivotal role in the binding and presentation of RNA for ribonucleolysis, and to serve as a scaffold for the association with catalytic subunits and accessory proteins or complexes. Required generally for normal embryonic and neuronal development. Also plays a critical role in the maintenance of neuronal function in mature flies by controlling the levels of specific mRNAs such as the synaptic regulator Arc1. The sequence is that of Exosome complex component RRP40 from Drosophila melanogaster (Fruit fly).